The sequence spans 466 residues: Ribulose bisphosphate carboxylase large chain (466 aa).

Lysine 5 bears the N6,N6,N6-trimethyllysine mark. Substrate is bound by residues asparagine 114 and threonine 164. Lysine 166 functions as the Proton acceptor in the catalytic mechanism. Lysine 168 is a binding site for substrate. Mg(2+) contacts are provided by lysine 192, aspartate 194, and glutamate 195. Lysine 192 bears the N6-carboxylysine mark. The active-site Proton acceptor is the histidine 285. Substrate is bound by residues arginine 286, histidine 318, and serine 370.

This sequence belongs to the RuBisCO large chain family. Type I subfamily. As to quaternary structure, heterohexadecamer of 8 large chains and 8 small chains; disulfide-linked. The disulfide link is formed within the large subunit homodimers. Requires Mg(2+) as cofactor. Post-translationally, the disulfide bond which can form in the large chain dimeric partners within the hexadecamer appears to be associated with oxidative stress and protein turnover.

The protein resides in the plastid. It is found in the chloroplast. The catalysed reaction is 2 (2R)-3-phosphoglycerate + 2 H(+) = D-ribulose 1,5-bisphosphate + CO2 + H2O. It carries out the reaction D-ribulose 1,5-bisphosphate + O2 = 2-phosphoglycolate + (2R)-3-phosphoglycerate + 2 H(+). Functionally, ruBisCO catalyzes two reactions: the carboxylation of D-ribulose 1,5-bisphosphate, the primary event in carbon dioxide fixation, as well as the oxidative fragmentation of the pentose substrate in the photorespiration process. Both reactions occur simultaneously and in competition at the same active site. This Berzelia lanuginosa (Buttonbush) protein is Ribulose bisphosphate carboxylase large chain.